Consider the following 150-residue polypeptide: Ribosome-binding factor A (150 aa).

The segment at 131–150 is disordered; that stretch reads LSHDDDEDGGADEAPRNGDE.

It belongs to the RbfA family. Monomer. Binds 30S ribosomal subunits, but not 50S ribosomal subunits or 70S ribosomes.

Its subcellular location is the cytoplasm. Functionally, one of several proteins that assist in the late maturation steps of the functional core of the 30S ribosomal subunit. Associates with free 30S ribosomal subunits (but not with 30S subunits that are part of 70S ribosomes or polysomes). Required for efficient processing of 16S rRNA. May interact with the 5'-terminal helix region of 16S rRNA. This is Ribosome-binding factor A from Brucella melitensis biotype 2 (strain ATCC 23457).